Consider the following 505-residue polypeptide: Alpha-1-syntrophin (505 aa).

The segment at 1–77 (MASGRRAPRT…AEPGAASPPL (77 aa)) is disordered. PH domains are found at residues 6–269 (RAPR…AQVN) and 293–401 (DIKR…DGCH). The 84-residue stretch at 87-170 (RVTVRKADAG…EVVLEVKYMK (84 aa)) folds into the PDZ domain. A phosphoserine mark is found at serine 101, serine 184, serine 189, serine 193, and serine 200. The segment at 180 to 211 (ASGTSVGWDSPPASPLQRQPSSPGPPPRDLRD) is disordered. The SU domain occupies 449–505 (PFEKLQMSSDDGASLLFLDFGGAEGEIQLDLHSCPKTMVFIIHSFLSAKVTRLGLLA). The calmodulin-binding stretch occupies residues 483–505 (PKTMVFIIHSFLSAKVTRLGLLA).

The protein belongs to the syntrophin family. As to quaternary structure, monomer and homodimer. Interacts with the dystrophin related protein DTNA; SGCG of the dystrophin glycoprotein complex; NOS1; GRB2; GA; TGFA; MAPK12 and the sodium channel proteins SCN4A and SCN5A. Interacts with the dystrophin protein DMD in a calmodulin dependent manner and with related protein UTRN; SGCA of the dystrophin glycoprotein complex; F-actin; calmodulin and with the other members of the syntrophin family SNTB1 and SNTB2. Interacts with MYOC; regulates muscle hypertrophy. Interacts with DTNB. In terms of processing, phosphorylated by CaM-kinase II. Phosphorylation may inhibit the interaction with DMD.

The protein resides in the cell membrane. It is found in the sarcolemma. The protein localises to the cell junction. Its subcellular location is the cytoplasm. It localises to the cytoskeleton. Adapter protein that binds to and probably organizes the subcellular localization of a variety of membrane proteins. May link various receptors to the actin cytoskeleton and the extracellular matrix via the dystrophin glycoprotein complex. Plays an important role in synapse formation and in the organization of UTRN and acetylcholine receptors at the neuromuscular synapse. Binds to phosphatidylinositol 4,5-bisphosphate. The chain is Alpha-1-syntrophin (SNTA1) from Bos taurus (Bovine).